The primary structure comprises 220 residues: Glycerol-3-phosphate acyltransferase (220 aa).

Helical transmembrane passes span 4–24, 53–73, 80–100, 116–136, and 138–158; these read LTIL…AVLV, VAAL…VYLA, PVYL…PIFF, MPIG…VLLV, and GYSS…TYLI. Residues 193–220 form a disordered region; the sequence is WGRQAQRRQEEVGEMDDVAQKRDERDKK. Positions 210–220 are enriched in basic and acidic residues; that stretch reads VAQKRDERDKK.

Belongs to the PlsY family. In terms of assembly, probably interacts with PlsX.

It is found in the cell inner membrane. The catalysed reaction is an acyl phosphate + sn-glycerol 3-phosphate = a 1-acyl-sn-glycero-3-phosphate + phosphate. It functions in the pathway lipid metabolism; phospholipid metabolism. In terms of biological role, catalyzes the transfer of an acyl group from acyl-phosphate (acyl-PO(4)) to glycerol-3-phosphate (G3P) to form lysophosphatidic acid (LPA). This enzyme utilizes acyl-phosphate as fatty acyl donor, but not acyl-CoA or acyl-ACP. In Aeromonas salmonicida (strain A449), this protein is Glycerol-3-phosphate acyltransferase.